A 358-amino-acid polypeptide reads, in one-letter code: Oligopeptide transport ATP-binding protein OppD (358 aa).

Positions 8 to 259 (LEVKDLAISF…PRHPYTWGLL (252 aa)) constitute an ABC transporter domain. 44-51 (GESGSGKS) provides a ligand contact to ATP.

Belongs to the ABC transporter superfamily. The complex is composed of two ATP-binding proteins (OppD and OppF), two transmembrane proteins (OppB and OppC) and a solute-binding protein (OppA).

It localises to the cell membrane. The catalysed reaction is a [peptide](out) + ATP + H2O = a [peptide](in) + ADP + phosphate + H(+). Functionally, part of the ABC transporter complex OppABCDF involved in the uptake of oligopeptides. Probably responsible for energy coupling to the transport system. Required for sporulation and genetic competence. The protein is Oligopeptide transport ATP-binding protein OppD of Bacillus subtilis (strain 168).